The sequence spans 577 residues: Aspartate--tRNA(Asp/Asn) ligase (577 aa).

Residue E171 participates in L-aspartate binding. The segment at 195–198 is aspartate; that stretch reads QLFK. Position 217 (R217) interacts with L-aspartate. Residues 217 to 219 and Q226 contribute to the ATP site; that span reads RDE. H444 lines the L-aspartate pocket. Residue E474 participates in ATP binding. R481 contributes to the L-aspartate binding site. 526 to 529 lines the ATP pocket; sequence GFDR.

Belongs to the class-II aminoacyl-tRNA synthetase family. Type 1 subfamily. As to quaternary structure, homodimer.

Its subcellular location is the cytoplasm. It carries out the reaction tRNA(Asx) + L-aspartate + ATP = L-aspartyl-tRNA(Asx) + AMP + diphosphate. Its function is as follows. Aspartyl-tRNA synthetase with relaxed tRNA specificity since it is able to aspartylate not only its cognate tRNA(Asp) but also tRNA(Asn). Reaction proceeds in two steps: L-aspartate is first activated by ATP to form Asp-AMP and then transferred to the acceptor end of tRNA(Asp/Asn). The protein is Aspartate--tRNA(Asp/Asn) ligase of Helicobacter pylori (strain G27).